The primary structure comprises 192 residues: Protein GrpE (192 aa).

The disordered stretch occupies residues 1–41 (MSKEEFPHEKDLKDEVTPDKAPKKDPKAAPKEEVKENPVEN).

Belongs to the GrpE family. As to quaternary structure, homodimer.

The protein localises to the cytoplasm. In terms of biological role, participates actively in the response to hyperosmotic and heat shock by preventing the aggregation of stress-denatured proteins, in association with DnaK and GrpE. It is the nucleotide exchange factor for DnaK and may function as a thermosensor. Unfolded proteins bind initially to DnaJ; upon interaction with the DnaJ-bound protein, DnaK hydrolyzes its bound ATP, resulting in the formation of a stable complex. GrpE releases ADP from DnaK; ATP binding to DnaK triggers the release of the substrate protein, thus completing the reaction cycle. Several rounds of ATP-dependent interactions between DnaJ, DnaK and GrpE are required for fully efficient folding. The sequence is that of Protein GrpE from Lactobacillus johnsonii (strain CNCM I-12250 / La1 / NCC 533).